We begin with the raw amino-acid sequence, 210 residues long: MLSSLSPHLSNVRQTLTQVLNFALVLSTAFMMWKALSIYTNSSSPIVVVLSGSMEPAFQRGDLLFLWNRSPRAEVGEIVVYNVRGKDIPIVHRVVRAFGDDARDPKEGGGKKGKSASGTGKKESVAAGAVHSDSSFVSHKLLTKGDNNIADDTELYARGQDYLDRKVDLVGSVRGYIPAVGYVTIMLSEHPWLKSVLLGLMGVMVILQRE.

Topologically, residues M1–Q14 are cytoplasmic. A helical; Signal-anchor for type II membrane protein membrane pass occupies residues T15–M31. The Lumenal segment spans residues M32–E210. N41 is a glycosylation site (N-linked (GlcNAc...) asparagine). Active-site charge relay system residues include S53 and H92. The segment covering D101–G110 has biased composition (basic and acidic residues). Residues D101–S124 form a disordered region. The active-site Charge relay system is the D152. Residues V196 to L207 are C-terminal short (CTS) helix.

The protein belongs to the peptidase S26B family. As to quaternary structure, component of the signal peptidase complex (SPC) composed of a catalytic subunit SEC11 and three accessory subunits SPC1, SPC2 and SPC3. The complex induces a local thinning of the ER membrane which is used to measure the length of the signal peptide (SP) h-region of protein substrates. This ensures the selectivity of the complex towards h-regions shorter than 18-20 amino acids. SPC associates with the translocon complex.

The protein localises to the endoplasmic reticulum membrane. It carries out the reaction Cleavage of hydrophobic, N-terminal signal or leader sequences from secreted and periplasmic proteins.. Catalytic component of the signal peptidase complex (SPC) which catalyzes the cleavage of N-terminal signal sequences from nascent proteins as they are translocated into the lumen of the endoplasmic reticulum. Specifically cleaves N-terminal signal peptides that contain a hydrophobic alpha-helix (h-region) shorter than 18-20 amino acids. The polypeptide is Signal peptidase complex catalytic subunit SEC11 (SEC11) (Uncinocarpus reesii (strain UAMH 1704)).